The chain runs to 111 residues: Ribosome-binding factor A (111 aa).

The protein belongs to the RbfA family. In terms of assembly, monomer. Binds 30S ribosomal subunits, but not 50S ribosomal subunits or 70S ribosomes.

It is found in the cytoplasm. Its function is as follows. One of several proteins that assist in the late maturation steps of the functional core of the 30S ribosomal subunit. Associates with free 30S ribosomal subunits (but not with 30S subunits that are part of 70S ribosomes or polysomes). Required for efficient processing of 16S rRNA. May interact with the 5'-terminal helix region of 16S rRNA. In Helicobacter pylori (strain Shi470), this protein is Ribosome-binding factor A.